The chain runs to 143 residues: Large ribosomal subunit protein uL11 (143 aa).

This sequence belongs to the universal ribosomal protein uL11 family. As to quaternary structure, part of the ribosomal stalk of the 50S ribosomal subunit. Interacts with L10 and the large rRNA to form the base of the stalk. L10 forms an elongated spine to which L12 dimers bind in a sequential fashion forming a multimeric L10(L12)X complex. One or more lysine residues are methylated.

In terms of biological role, forms part of the ribosomal stalk which helps the ribosome interact with GTP-bound translation factors. This chain is Large ribosomal subunit protein uL11, found in Ralstonia nicotianae (strain ATCC BAA-1114 / GMI1000) (Ralstonia solanacearum).